The chain runs to 199 residues: NAD(P)H dehydrogenase (quinone) (199 aa).

In terms of domain architecture, Flavodoxin-like spans 4 to 190 (ILVLYYSMYG…AIARFQGEHV (187 aa)). FMN is bound by residues 10 to 15 (SMYGHI) and 79 to 81 (TRF). Residue Tyr-12 participates in NAD(+) binding. Trp-99 lines the substrate pocket. Residues 114 to 119 (STGTGG) and His-134 each bind FMN.

This sequence belongs to the WrbA family. It depends on FMN as a cofactor.

The enzyme catalyses a quinone + NADH + H(+) = a quinol + NAD(+). It carries out the reaction a quinone + NADPH + H(+) = a quinol + NADP(+). In Yersinia pseudotuberculosis serotype O:1b (strain IP 31758), this protein is NAD(P)H dehydrogenase (quinone).